The primary structure comprises 185 residues: Ribosome-recycling factor (185 aa).

Positions 138 to 157 (ELKKLEKDHTASEDEVKRAQ) are disordered.

It belongs to the RRF family.

The protein localises to the cytoplasm. In terms of biological role, responsible for the release of ribosomes from messenger RNA at the termination of protein biosynthesis. May increase the efficiency of translation by recycling ribosomes from one round of translation to another. The chain is Ribosome-recycling factor from Desulfitobacterium hafniense (strain DSM 10664 / DCB-2).